We begin with the raw amino-acid sequence, 375 residues long: Xylose transport system permease protein XylH (375 aa).

The next 10 membrane-spanning stretches (helical) occupy residues 9 to 29 (LQVY…SVAT), 52 to 72 (LAIG…VGSL), 85 to 105 (VWWG…GLIF), 118 to 138 (VPSF…LIGL), 159 to 179 (LSDI…VLWG), 199 to 219 (DFTK…LLND), 220 to 240 (YRGI…GLFL), 271 to 291 (KLII…ILSA), 319 to 339 (LAGG…IASL), and 348 to 368 (VPTF…VWID).

It belongs to the binding-protein-dependent transport system permease family. AraH/RbsC subfamily.

It localises to the cell inner membrane. Part of the binding-protein-dependent transport system for D-xylose. Probably responsible for the translocation of the substrate across the membrane. This Haemophilus influenzae (strain ATCC 51907 / DSM 11121 / KW20 / Rd) protein is Xylose transport system permease protein XylH (xylH).